A 396-amino-acid polypeptide reads, in one-letter code: Elongation factor Tu (396 aa).

The tr-type G domain maps to K10–E206. The segment at G19 to T26 is G1. Residue G19–T26 coordinates GTP. Position 26 (T26) interacts with Mg(2+). Positions G60–N64 are G2. Residues D81–G84 are G3. GTP-binding positions include D81–H85 and N136–D139. The G4 stretch occupies residues N136–D139. A G5 region spans residues S174–K176.

It belongs to the TRAFAC class translation factor GTPase superfamily. Classic translation factor GTPase family. EF-Tu/EF-1A subfamily. Monomer.

Its subcellular location is the cytoplasm. It carries out the reaction GTP + H2O = GDP + phosphate + H(+). GTP hydrolase that promotes the GTP-dependent binding of aminoacyl-tRNA to the A-site of ribosomes during protein biosynthesis. This is Elongation factor Tu from Thiomonas delicata (Thiomonas cuprina).